Here is a 742-residue protein sequence, read N- to C-terminus: Polyphosphate kinase (742 aa).

Asparagine 91 is a binding site for ATP. Positions 431 and 461 each coordinate Mg(2+). Histidine 491 functions as the Phosphohistidine intermediate in the catalytic mechanism. ATP-binding residues include tyrosine 524, arginine 624, and histidine 652. The segment at 718-742 (WTASPQEGHSVRDHQESLMERHRSP) is disordered. Residues 726–742 (HSVRDHQESLMERHRSP) are compositionally biased toward basic and acidic residues.

This sequence belongs to the polyphosphate kinase 1 (PPK1) family. Mg(2+) serves as cofactor. Post-translationally, an intermediate of this reaction is the autophosphorylated ppk in which a phosphate is covalently linked to a histidine residue through a N-P bond.

It carries out the reaction [phosphate](n) + ATP = [phosphate](n+1) + ADP. Its function is as follows. Catalyzes the reversible transfer of the terminal phosphate of ATP to form a long-chain polyphosphate (polyP). This chain is Polyphosphate kinase, found in Mycobacterium bovis (strain ATCC BAA-935 / AF2122/97).